We begin with the raw amino-acid sequence, 546 residues long: Chaperonin GroEL (546 aa).

ATP-binding positions include 30 to 33, lysine 51, 87 to 91, glycine 415, and aspartate 497; these read TLGP and DGTTT. The interval 527–546 is disordered; it reads PKKDSPAPAMPGGGMGGMDF. Residues 537–546 are compositionally biased toward gly residues; sequence PGGGMGGMDF.

The protein belongs to the chaperonin (HSP60) family. Forms a cylinder of 14 subunits composed of two heptameric rings stacked back-to-back. Interacts with the co-chaperonin GroES.

It localises to the cytoplasm. It carries out the reaction ATP + H2O + a folded polypeptide = ADP + phosphate + an unfolded polypeptide.. In terms of biological role, together with its co-chaperonin GroES, plays an essential role in assisting protein folding. The GroEL-GroES system forms a nano-cage that allows encapsulation of the non-native substrate proteins and provides a physical environment optimized to promote and accelerate protein folding. This chain is Chaperonin GroEL, found in Methylobacterium radiotolerans (strain ATCC 27329 / DSM 1819 / JCM 2831 / NBRC 15690 / NCIMB 10815 / 0-1).